The following is an 88-amino-acid chain: Outer membrane protein H.8 (88 aa).

Positions 1-17 are cleaved as a signal peptide; sequence MKKSLFAAALLSLALAA. Cysteine 18 carries the N-palmitoyl cysteine lipid modification. Cysteine 18 carries the S-diacylglycerol cysteine lipid modification. 13 tandem repeats follow at residues 23–27, 28–32, 33–37, 38–42, 43–47, 48–52, 53–57, 58–62, 63–67, 68–72, 73–77, 78–82, and 83–87. The interval 23–87 is 13 X 5 AA tandem repeats of [AS]-[AT]-E-A-[PAS]; it reads AAEAPAAEAS…AAEAPAAEAA (65 aa). Positions 23-88 are disordered; it reads AAEAPAAEAS…AEAPAAEAAK (66 aa). A compositionally biased stretch (low complexity) spans 25 to 88; it reads EAPAAEASST…AEAPAAEAAK (64 aa).

The protein resides in the cell outer membrane. The protein is Outer membrane protein H.8 of Neisseria gonorrhoeae (strain ATCC 700825 / FA 1090).